The following is a 471-amino-acid chain: L-amino acid dehydrogenase (471 aa).

A Mg(2+)-binding site is contributed by Gly-31. Ser-33 serves as a coordination point for FAD. Gly-34 contributes to the Mg(2+) binding site. FAD contacts are provided by Glu-52, Arg-60, and Val-256. Ala-283 serves as a coordination point for Mg(2+). Residue Phe-453 participates in FAD binding.

The protein belongs to the flavin monoamine oxidase family. It depends on FAD as a cofactor. The cofactor is Mg(2+).

Its subcellular location is the cellular thylakoid membrane. The enzyme catalyses a plastoquinone + an L-alpha-amino acid + H2O = a plastoquinol + a 2-oxocarboxylate + NH4(+). It carries out the reaction a plastoquinone + L-arginine + H2O = a plastoquinol + 5-guanidino-2-oxopentanoate + NH4(+). Its pathway is amino-acid degradation; L-arginine degradation. With respect to regulation, inhibited by Ca(2+) and other cations such as Ni(2+), Co(2+) and Zn(2+). The inhibition by o-phenanthroline and salicylhydroxamic acid suggests the presence of a metal cofactor besides FAD in the enzyme. The L-arginine-stimulated O(2) consumption involving slr0782 is inhibited by inhibitors of the respiratory electron transport chain, such as KCN and 2,5-dibromo-3-methyl-6-isopropyl-p-benzoquinone, which indicates a participation of the cytochrome b6/f complex and of a cytochrome oxidase. In terms of biological role, L-amino acid dehydrogenase with broad substrate specificity. Catalyzes the oxidative deamination of various L-amino acids, L-Arg and L-Cys being the best substrates in vitro. Likely functions mainly as an L-arginine dehydrogenase in vivo. Probably feeds electrons from L-arginine oxidation and also from the oxidation of other L-amino acids into the respiratory electron transport chain associated to the thylakoid membrane, and does not directly interact with molecular oxygen but donates electrons to the plastoquinone pool. Cannot use D-amino acids as substrates. This is L-amino acid dehydrogenase from Synechocystis sp. (strain ATCC 27184 / PCC 6803 / Kazusa).